Reading from the N-terminus, the 154-residue chain is UPF0225 protein Asuc_0343 (154 aa).

Belongs to the UPF0225 family.

In Actinobacillus succinogenes (strain ATCC 55618 / DSM 22257 / CCUG 43843 / 130Z), this protein is UPF0225 protein Asuc_0343.